A 358-amino-acid polypeptide reads, in one-letter code: MSVRAAVVGLGWAGRELWLPLLREHADFEVVAAVDADPASRQAFTKATGIPTHAAVSALTAREVDLAVVAVPNYLHTEVAGALLATGISVFLEKPVCLNSAEIDVLAAAERSGGMLLAGSAARYRGDVGALRRLLPELGEIRHVALGWIRARGVPRAGGWFTQREKAGGGALYDLGWHLLDTLAFLLGPAAFTQVIGVTSDDFVNAGAWRAAWRQDQLGADAADVEDTARGFLVRDDGVSVSLRASWASHQARDVSVIHVEGSAGTADLRCTFGFSPNREPEPVLSVTREGTTTRLPVPLERIGVEYTRQVSDLAAMLADPGHRGRAVAEARPIVSMIENFYASAGSARGRGAVPAYQ.

As to quaternary structure, interacts with RifK.

It carries out the reaction UDP-alpha-D-glucose + NAD(+) = UDP-3-oxo-alpha-D-glucose + NADH + H(+). Its pathway is antibiotic biosynthesis; rifamycin B biosynthesis. In terms of biological role, in a complex with RifK, RifL may catalyze the oxidation of UDP-glucose to UDP-3-keto-D-glucose, which would then be used by RifK to produce UDP-kanosamine. Is not able to use dTDP-glucose as substrate. This Amycolatopsis mediterranei (strain S699) (Nocardia mediterranei) protein is Putative UDP-kanosamine synthase oxidoreductase subunit (rifL).